Reading from the N-terminus, the 375-residue chain is Tryptophan--tRNA ligase (375 aa).

Positions 81–89 match the 'HIGH' region motif; sequence PSGPVHIGH. The short motif at 258-262 is the 'KMSKS' region element; sequence KMSAS.

Belongs to the class-I aminoacyl-tRNA synthetase family.

The protein localises to the cytoplasm. It catalyses the reaction tRNA(Trp) + L-tryptophan + ATP = L-tryptophyl-tRNA(Trp) + AMP + diphosphate + H(+). This is Tryptophan--tRNA ligase from Pyrobaculum aerophilum (strain ATCC 51768 / DSM 7523 / JCM 9630 / CIP 104966 / NBRC 100827 / IM2).